Reading from the N-terminus, the 376-residue chain is Phosphoglycerate kinase (376 aa).

Residues V1, D2, F3, N4, R17, S40, H41, G43, R44, L99, R100, H147, and R148 each coordinate (2R)-3-phosphoglycerate. G191 is an ADP binding site. Residue G191 participates in CDP binding. A192 and K193 together coordinate AMP. ATP is bound at residue A192. Residue A192 coordinates Mg(2+). D196 is a CDP binding site. D196 lines the Mg(2+) pocket. K197 serves as a coordination point for AMP. Position 197 (K197) interacts with ATP. G215 contributes to the ADP binding site. G215 provides a ligand contact to CDP. AMP contacts are provided by G216 and G290. ATP-binding residues include G216 and G290. G315 and F320 together coordinate CDP. Position 320 (F320) interacts with ADP. Position 321 (E321) interacts with AMP. Residues E321, D352, and T353 each coordinate ATP. D352 is a binding site for Mg(2+).

It belongs to the phosphoglycerate kinase family. In terms of assembly, monomer. It depends on Mg(2+) as a cofactor.

It catalyses the reaction (2R)-3-phosphoglycerate + ATP = (2R)-3-phospho-glyceroyl phosphate + ADP. Its pathway is carbohydrate degradation; glycolysis; pyruvate from D-glyceraldehyde 3-phosphate: step 2/5. The chain is Phosphoglycerate kinase (PGK) from Glaucoma chattoni.